The sequence spans 264 residues: Acyl-[acyl-carrier-protein]--UDP-N-acetylglucosamine O-acyltransferase (264 aa).

It belongs to the transferase hexapeptide repeat family. LpxA subfamily. In terms of assembly, homotrimer.

It localises to the cytoplasm. The enzyme catalyses a (3R)-hydroxyacyl-[ACP] + UDP-N-acetyl-alpha-D-glucosamine = a UDP-3-O-[(3R)-3-hydroxyacyl]-N-acetyl-alpha-D-glucosamine + holo-[ACP]. The protein operates within glycolipid biosynthesis; lipid IV(A) biosynthesis; lipid IV(A) from (3R)-3-hydroxytetradecanoyl-[acyl-carrier-protein] and UDP-N-acetyl-alpha-D-glucosamine: step 1/6. Its function is as follows. Involved in the biosynthesis of lipid A, a phosphorylated glycolipid that anchors the lipopolysaccharide to the outer membrane of the cell. The protein is Acyl-[acyl-carrier-protein]--UDP-N-acetylglucosamine O-acyltransferase of Leptothrix cholodnii (strain ATCC 51168 / LMG 8142 / SP-6) (Leptothrix discophora (strain SP-6)).